The sequence spans 171 residues: Ribosome-binding factor A (171 aa).

Residues 126–138 (VREGAKHAGDADP) are compositionally biased toward basic and acidic residues. The disordered stretch occupies residues 126 to 171 (VREGAKHAGDADPYRVSGVEEEAGGSGEVQAEFDAEDTGDRNRQDD).

The protein belongs to the RbfA family. Monomer. Binds 30S ribosomal subunits, but not 50S ribosomal subunits or 70S ribosomes.

It localises to the cytoplasm. Its function is as follows. One of several proteins that assist in the late maturation steps of the functional core of the 30S ribosomal subunit. Associates with free 30S ribosomal subunits (but not with 30S subunits that are part of 70S ribosomes or polysomes). Required for efficient processing of 16S rRNA. May interact with the 5'-terminal helix region of 16S rRNA. This is Ribosome-binding factor A from Mycobacterium sp. (strain JLS).